Here is a 240-residue protein sequence, read N- to C-terminus: MDLRLIFGPTCTGKTSTAIALAQQTGLPVLSLDRVQCCPQLSTGSGRPTVEELKGTTRLYLDDRPLVKGIIAAEQAHERLIAEVYNYEAHGGLILEGGSISLLKCMAQSGYWSADFRWHIIRHKLADEETFMKAAKARVKQMLCPAIGPSLIQELVYLWNEPRLRPILKEIDGYRYAMLFASQNRITPDMLLQLDADMEGKLIHGIAQEYLIHARRQEHEFPPVSAAAFEGFEGPPFGAY.

The protein belongs to the isopentenyl transferase family.

The enzyme catalyses dimethylallyl diphosphate + AMP = N(6)-(dimethylallyl)adenosine 5'-phosphate + diphosphate. Transfers dimethylallyl groups to AMP as part of the biosynthesis of cytokinin phytohormones. The chain is Adenylate dimethylallyltransferase (ipt) from Agrobacterium vitis (Rhizobium vitis).